Here is a 141-residue protein sequence, read N- to C-terminus: Large ribosomal subunit protein uL11 (141 aa).

This sequence belongs to the universal ribosomal protein uL11 family. In terms of assembly, part of the ribosomal stalk of the 50S ribosomal subunit. Interacts with L10 and the large rRNA to form the base of the stalk. L10 forms an elongated spine to which L12 dimers bind in a sequential fashion forming a multimeric L10(L12)X complex. One or more lysine residues are methylated.

In terms of biological role, forms part of the ribosomal stalk which helps the ribosome interact with GTP-bound translation factors. The chain is Large ribosomal subunit protein uL11 from Phytoplasma australiense.